The primary structure comprises 307 residues: 1-aminocyclopropane-1-carboxylate oxidase 5 (307 aa).

The stretch at 106–134 forms a coiled coil; it reads SNIKETMGEYREEVRKLASKMMEVMDENL. The Fe2OG dioxygenase domain occupies 152–256; the sequence is GEETAFFGTK…RRSIASFYNP (105 aa). Histidine 180, aspartate 182, and histidine 237 together coordinate Fe cation. Residue arginine 247 coordinates 2-oxoglutarate.

Belongs to the iron/ascorbate-dependent oxidoreductase family. Requires Fe(2+) as cofactor.

The catalysed reaction is 1-aminocyclopropane-1-carboxylate + L-ascorbate + O2 = ethene + L-dehydroascorbate + hydrogen cyanide + CO2 + 2 H2O. The protein operates within alkene biosynthesis; ethylene biosynthesis via S-adenosyl-L-methionine; ethylene from S-adenosyl-L-methionine: step 2/2. In terms of biological role, enzyme involved in the ethylene biosynthesis. This chain is 1-aminocyclopropane-1-carboxylate oxidase 5, found in Arabidopsis thaliana (Mouse-ear cress).